The primary structure comprises 299 residues: Ethylmalonyl-CoA decarboxylase (299 aa).

Belongs to the enoyl-CoA hydratase/isomerase family.

It is found in the cytoplasm. The protein resides in the cytosol. The enzyme catalyses (2S)-ethylmalonyl-CoA + H(+) = butanoyl-CoA + CO2. It carries out the reaction (S)-methylmalonyl-CoA + H(+) = propanoyl-CoA + CO2. It catalyses the reaction (2R)-ethylmalonyl-CoA + H(+) = butanoyl-CoA + CO2. Decarboxylates ethylmalonyl-CoA, a potentially toxic metabolite, to form butyryl-CoA, suggesting it might be involved in metabolite proofreading. Acts preferentially on (S)-ethylmalonyl-CoA but also has some activity on the (R)-isomer. Also has methylmalonyl-CoA decarboxylase activity at lower level. The chain is Ethylmalonyl-CoA decarboxylase (echdc1) from Xenopus laevis (African clawed frog).